The chain runs to 314 residues: tRNA uridine(34) hydroxylase (314 aa).

In terms of domain architecture, Rhodanese spans 140–234; the sequence is SRDDVILVDT…YLEETPAEES (95 aa). The Cysteine persulfide intermediate role is filled by Cys-194.

Belongs to the TrhO family.

The enzyme catalyses uridine(34) in tRNA + AH2 + O2 = 5-hydroxyuridine(34) in tRNA + A + H2O. Functionally, catalyzes oxygen-dependent 5-hydroxyuridine (ho5U) modification at position 34 in tRNAs. This is tRNA uridine(34) hydroxylase from Acinetobacter baylyi (strain ATCC 33305 / BD413 / ADP1).